The primary structure comprises 207 residues: UPF0319 protein VV1_2115 (207 aa).

The signal sequence occupies residues 1–18 (MLRVLGLAGMLMSFNIHA).

The protein belongs to the UPF0319 family.

The polypeptide is UPF0319 protein VV1_2115 (Vibrio vulnificus (strain CMCP6)).